Reading from the N-terminus, the 796-residue chain is Peroxisome proliferator-activated receptor gamma coactivator 1-alpha (796 aa).

Position 77 is an N6-acetyllysine (Lys77). The interval 98–138 (PVDEDGLPSFDALTDGDVTTENEASPSSMPDGTPPPQEAEE) is disordered. Over residues 114–127 (DVTTENEASPSSMP) the composition is skewed to polar residues. The LXXLL motif signature appears at 142–146 (LKKLL). Lys144 is modified (N6-acetyllysine). A Phosphothreonine; by AMPK modification is found at Thr176. N6-acetyllysine is present on Lys182. Residues 211–275 (YLTTNDDPPH…NDPKGSPFEN (65 aa)) are disordered. Residues 217-235 (DPPHTKPTENRNSSRDKCT) show a composition bias toward basic and acidic residues. Positions 242-258 (TQSQTQHLQAKPTTLSL) are enriched in polar residues. N6-acetyllysine is present on residues Lys252, Lys269, Lys276, and Lys319. 2 disordered regions span residues 288–374 (GTAG…AKRP) and 398–452 (TSQE…RKQL). The segment at 291 to 337 (GLTPPTTPPHKANQDNPFRASPKLKPSCKTVVPPPSKKARYSESSCT) is interaction with PPARG. Residues 332-344 (SESSCTQGSNSTK) are compositionally biased toward polar residues. Lys345 and Lys411 each carry N6-acetyllysine. Positions 348-796 (EQSELYAQLS…LKEAQRSLRR (449 aa)) are mediates interaction with RNF34. Over residues 401–412 (ELHDSRQLENKD) the composition is skewed to basic and acidic residues. 2 stretches are compositionally biased toward polar residues: residues 413–428 (APSS…STDS) and 439–450 (VSRQVSPGSTRK). Lys450 is modified (N6-acetyllysine). Phosphoserine; by AMPK is present on Ser538. 3 disordered regions span residues 542–597 (FNSP…SSSR), 609–637 (HRTH…SYEE), and 648–667 (YRRE…ERQR). The span at 562–577 (QRMRSRSRSFSRHRSC) shows a compositional bias: basic residues. The span at 578-597 (SRSPYSRSRSRSPGSRSSSR) shows a compositional bias: low complexity. The region spanning 675-751 (RVIYVGKIRP…TDFELYFCGR (77 aa)) is the RRM domain. 2 positions are modified to N6-acetyllysine: Lys756 and Lys777.

As to quaternary structure, homooligomer. Interacts with MYBBP1A; inhibits MYBBP1A transcriptional activation. Interacts with PRDM16, LPIN1 and PML. Interacts (via LXXLL motif) with RORA and RORC (via AF-2 motif); activates RORA and RORC transcriptional activation. Interacts with LRPPRC. Interacts with FOXO1. Interacts with NR5A2. Post-translationally, phosphorylation by AMPK in skeletal muscle increases activation of its own promoter. Phosphorylated by CLK2. In terms of processing, heavily acetylated by KAT2A/GCN5 under conditions of high nutrients, leading to inactivation of PPARGC1A. Deacetylated by SIRT1 in low nutrients/high NAD conditions, leading to its activation. Ubiquitinated. Ubiquitination by RNF34 induces proteasomal degradation.

Its subcellular location is the nucleus. The protein localises to the PML body. Transcriptional coactivator for steroid receptors and nuclear receptors. Greatly increases the transcriptional activity of PPARG and thyroid hormone receptor on the uncoupling protein promoter. Can regulate key mitochondrial genes that contribute to the program of adaptive thermogenesis. Plays an essential role in metabolic reprogramming in response to dietary availability through coordination of the expression of a wide array of genes involved in glucose and fatty acid metabolism. Acts as a key regulator of gluconeogenesis: stimulates hepatic gluconeogenesis by increasing the expression of gluconeogenic enzymes, and acting together with FOXO1 to promote the fasting gluconeogenic program. Induces the expression of PERM1 in the skeletal muscle in an ESRRA-dependent manner. Also involved in the integration of the circadian rhythms and energy metabolism. Required for oscillatory expression of clock genes, such as BMAL1 and NR1D1, through the coactivation of RORA and RORC, and metabolic genes, such as PDK4 and PEPCK. In Bos taurus (Bovine), this protein is Peroxisome proliferator-activated receptor gamma coactivator 1-alpha (PPARGC1A).